Reading from the N-terminus, the 860-residue chain is DNA mismatch repair protein MutS (860 aa).

Residue 618-625 coordinates ATP; sequence GPNMGGKS.

Belongs to the DNA mismatch repair MutS family.

In terms of biological role, this protein is involved in the repair of mismatches in DNA. It is possible that it carries out the mismatch recognition step. This protein has a weak ATPase activity. In Shewanella piezotolerans (strain WP3 / JCM 13877), this protein is DNA mismatch repair protein MutS.